The following is a 488-amino-acid chain: GTPase Der (488 aa).

EngA-type G domains follow at residues 3–166 (PVVA…AEAM) and 199–372 (IKLA…DSAT). Residues 9-16 (GRPNVGKS), 56-60 (DTGGI), 118-121 (NKVD), 205-212 (GKPNVGKS), 252-256 (DTAGV), and 317-320 (NKWD) each bind GTP. Residues 373 to 457 (RRVSTSMLTR…PIQLRFQEGD (85 aa)) enclose the KH-like domain. The segment at 469–488 (MSQERRRKRALSHIKDRKTK) is disordered. A compositionally biased stretch (basic residues) spans 473 to 488 (RRRKRALSHIKDRKTK).

It belongs to the TRAFAC class TrmE-Era-EngA-EngB-Septin-like GTPase superfamily. EngA (Der) GTPase family. As to quaternary structure, associates with the 50S ribosomal subunit.

In terms of biological role, GTPase that plays an essential role in the late steps of ribosome biogenesis. The polypeptide is GTPase Der (Shewanella sp. (strain W3-18-1)).